The primary structure comprises 403 residues: MDKLSIRDLSLEGKKVLVRVDFNVPIKDGKILDDVRIRSAMPTIHYLLKQDAAVILVSHLGRPKGGVFEEAYSLAPIVPVLEGYLGHHVPLSPDCIGEVARQAVAQLSPGRVLLLENVRFHKGEEHPDEDPSFAIELAAYADFYVNDAFGTSHRKHASVYRVPQLFPDRAAAGFLMEKELEFLGQHLLVEPKRPFTAILGGAKMSSKIGVIEALLSCVDHLVLAGGMGYTFLRAMNRQVGNSLVEESGIPLAKKVLEKAQALGVKIHLPVDAKVAKQCDSGEDWRELSIQEGIPEGLAGFDIGAQTIELFSKVIQESATIFWNGPVGVYEVPPFDQGSKAIAQCLASHSSAVTVVGGGDAAAVVALAGCTSQISHVSTGGGASLEFLEKGSLPGTEILSPAQS.

Substrate is bound by residues 21–23 (DFN), Arg36, 59–62 (HLGR), Arg119, and Arg154. Residues Lys207, Gly299, Glu330, and 357 to 360 (GGDA) each bind ATP.

The protein belongs to the phosphoglycerate kinase family. In terms of assembly, monomer.

Its subcellular location is the cytoplasm. It carries out the reaction (2R)-3-phosphoglycerate + ATP = (2R)-3-phospho-glyceroyl phosphate + ADP. It functions in the pathway carbohydrate degradation; glycolysis; pyruvate from D-glyceraldehyde 3-phosphate: step 2/5. The polypeptide is Phosphoglycerate kinase (Chlamydia trachomatis serovar L2 (strain ATCC VR-902B / DSM 19102 / 434/Bu)).